The following is a 138-amino-acid chain: MATIHVDVVSAEASIFSGEAKFVALPGEMGELGIYPRHTPLITRIKPGAVRVERADNGEEEFVFVAGGILEVQPDRVTVLADTAIRGHDLDEAKAEEAKKAAEEAMKNAKSDIDFAKAQGEFAAMAAQIAALRKFRKK.

It belongs to the ATPase epsilon chain family. In terms of assembly, F-type ATPases have 2 components, CF(1) - the catalytic core - and CF(0) - the membrane proton channel. CF(1) has five subunits: alpha(3), beta(3), gamma(1), delta(1), epsilon(1). CF(0) has three main subunits: a, b and c.

It is found in the cell inner membrane. Its function is as follows. Produces ATP from ADP in the presence of a proton gradient across the membrane. This is ATP synthase epsilon chain from Methylibium petroleiphilum (strain ATCC BAA-1232 / LMG 22953 / PM1).